A 595-amino-acid polypeptide reads, in one-letter code: MKFVKQKIQKLRKKLRHWEYLYYTKNESAVSDEKYDAMLEKLNQLEQIYPHLIAESSPTQRIGGVSQYNFKKIHHKVPMLSLNSIVASFQLLSFDKRIKIKLHANHVMSYCCELKIDGVAVSLLYKEGKLIYAATRGDGKIGEDVTENISTIRAVPMCLKIDSNKYGKLPYLLEIRGEVFISKLCFLELNKITIQQGNKPFSNARNAASGSLRQLDPSVTATRPLSFYCYGISNYCGEKELPDSHWERLQLCENWGLPINNYIRLISGVNKVLEYYSYIKTIRSNLEFNIDGIVIKVNSCAYQSKLGCGSRAPHWALAYKFPSEVSSAKVDNVIFQVGRTGIITPIAYLEPIVISDVTIRKVNMHNINEVKRLGLMIGDTVRIQRSGDVIPKIVEVILSERTDHVKTIELPRFCPVCGSRIKTWRNQSILRCTAGLSCLAQRKATLEHFVSKKAMNIYGMGNKIIDQLVNQGLIFTSSDVFRLNKNKLLCLEGFGLENIERLLRSIEDSKKITLARFIYALGIYGVGETVASNLAIVYKTIENLAAADLQSLSNLKYVGPIIANNIYHFFRNPDNLKNVQDLIDPAIGIQLYVIT.

NAD(+) is bound by residues Asp32–Asp36, Ser81–Leu82, and Glu113. The N6-AMP-lysine intermediate role is filled by Lys115. Arg136, Glu178, Lys296, and Lys320 together coordinate NAD(+). The Zn(2+) site is built by Cys414, Cys417, Cys432, and Cys438.

Belongs to the NAD-dependent DNA ligase family. LigA subfamily. Requires Mg(2+) as cofactor. It depends on Mn(2+) as a cofactor.

The enzyme catalyses NAD(+) + (deoxyribonucleotide)n-3'-hydroxyl + 5'-phospho-(deoxyribonucleotide)m = (deoxyribonucleotide)n+m + AMP + beta-nicotinamide D-nucleotide.. DNA ligase that catalyzes the formation of phosphodiester linkages between 5'-phosphoryl and 3'-hydroxyl groups in double-stranded DNA using NAD as a coenzyme and as the energy source for the reaction. It is essential for DNA replication and repair of damaged DNA. This chain is DNA ligase, found in Blochmanniella pennsylvanica (strain BPEN).